The primary structure comprises 139 residues: Holo-[acyl-carrier-protein] synthase (139 aa).

Positions 8 and 61 each coordinate Mg(2+).

This sequence belongs to the P-Pant transferase superfamily. AcpS family. The cofactor is Mg(2+).

The protein localises to the cytoplasm. It catalyses the reaction apo-[ACP] + CoA = holo-[ACP] + adenosine 3',5'-bisphosphate + H(+). Functionally, transfers the 4'-phosphopantetheine moiety from coenzyme A to a Ser of acyl-carrier-protein. The chain is Holo-[acyl-carrier-protein] synthase from Bradyrhizobium sp. (strain BTAi1 / ATCC BAA-1182).